Consider the following 155-residue polypeptide: Endoribonuclease YbeY (155 aa).

Residues His120, His124, and His130 each contribute to the Zn(2+) site.

The protein belongs to the endoribonuclease YbeY family. Zn(2+) is required as a cofactor.

It localises to the cytoplasm. In terms of biological role, single strand-specific metallo-endoribonuclease involved in late-stage 70S ribosome quality control and in maturation of the 3' terminus of the 16S rRNA. This Staphylococcus aureus (strain Mu3 / ATCC 700698) protein is Endoribonuclease YbeY.